The sequence spans 95 residues: Integration host factor subunit beta (95 aa).

The segment at Arg-59 to Ser-95 is disordered. A compositionally biased stretch (basic and acidic residues) spans Leu-72–Ser-95.

This sequence belongs to the bacterial histone-like protein family. As to quaternary structure, heterodimer of an alpha and a beta chain.

In terms of biological role, this protein is one of the two subunits of integration host factor, a specific DNA-binding protein that functions in genetic recombination as well as in transcriptional and translational control. In Ectopseudomonas mendocina (strain ymp) (Pseudomonas mendocina), this protein is Integration host factor subunit beta.